The sequence spans 196 residues: GTP cyclohydrolase-2 (196 aa).

A GTP-binding site is contributed by 49–53; that stretch reads RIHSE. The Zn(2+) site is built by Cys-54, Cys-65, and Cys-67. Residues Gln-70, 92 to 94, and Thr-114 contribute to the GTP site; that span reads EGR. Asp-126 (proton acceptor) is an active-site residue. Arg-128 functions as the Nucleophile in the catalytic mechanism. Positions 149 and 154 each coordinate GTP.

This sequence belongs to the GTP cyclohydrolase II family. In terms of assembly, homodimer. Zn(2+) serves as cofactor.

It carries out the reaction GTP + 4 H2O = 2,5-diamino-6-hydroxy-4-(5-phosphoribosylamino)-pyrimidine + formate + 2 phosphate + 3 H(+). It participates in cofactor biosynthesis; riboflavin biosynthesis; 5-amino-6-(D-ribitylamino)uracil from GTP: step 1/4. Catalyzes the conversion of GTP to 2,5-diamino-6-ribosylamino-4(3H)-pyrimidinone 5'-phosphate (DARP), formate and pyrophosphate. The polypeptide is GTP cyclohydrolase-2 (Buchnera aphidicola subsp. Schizaphis graminum (strain Sg)).